The sequence spans 270 residues: HTH-type transcriptional activator AllS (270 aa).

The HTH lysR-type domain maps to 4-61 (LDPETLRTFVSVAETGSFSRAAEKLYKTTATISYRIKLLEDNTGVALFSRTTRSVLLT). The H-T-H motif DNA-binding region spans 21–40 (FSRAAEKLYKTTATISYRIK).

It belongs to the LysR transcriptional regulatory family.

Its function is as follows. Positive regulator essential for the expression of allD operon. Binds to the allD promoter. This Klebsiella pneumoniae protein is HTH-type transcriptional activator AllS (allS).